A 195-amino-acid polypeptide reads, in one-letter code: dTDP-4-dehydrorhamnose 3,5-epimerase (195 aa).

Substrate contacts are provided by residues Arg-31, Glu-36, 54 to 56 (QDN), and Arg-67. His-70 (proton acceptor) is an active-site residue. Residues Lys-80 and His-127 each contribute to the substrate site. The Proton donor role is filled by Tyr-140. The substrate site is built by Asp-151 and Lys-176.

Belongs to the dTDP-4-dehydrorhamnose 3,5-epimerase family. In terms of assembly, homodimer.

The catalysed reaction is dTDP-4-dehydro-6-deoxy-alpha-D-glucose = dTDP-4-dehydro-beta-L-rhamnose. Its pathway is carbohydrate biosynthesis; dTDP-L-rhamnose biosynthesis. Catalyzes the epimerization of the C3' and C5'positions of dTDP-6-deoxy-D-xylo-4-hexulose, forming dTDP-6-deoxy-L-lyxo-4-hexulose. The protein is dTDP-4-dehydrorhamnose 3,5-epimerase of Sinorhizobium fredii (strain NBRC 101917 / NGR234).